The primary structure comprises 930 residues: APC membrane recruitment protein 1 (930 aa).

Disordered stretches follow at residues 1 to 33, 55 to 76, 104 to 133, 161 to 193, 222 to 245, and 366 to 454; these read MEIA…PPSV, FFGG…TKSQ, CSEP…LFSS, TVPG…NQTT, EMDK…RQEG, and EVCY…PRDS. Positions 222-242 are enriched in basic and acidic residues; the sequence is EMDKRRRAEEEGIGEDEKTGR. Composition is skewed to polar residues over residues 377–399 and 413–424; these read DSPS…SSPM and SPQSDRQESVPN. Positions 439–452 are enriched in basic and acidic residues; it reads EESRERPHQERLPR.

The protein belongs to the Amer family.

The protein resides in the cytoplasm. The protein localises to the cell membrane. It is found in the nucleus. In terms of biological role, regulator of the canonical Wnt signaling pathway. Acts by specifically binding phosphatidylinositol 4,5-bisphosphate (PtdIns(4,5)P2), translocating to the cell membrane and interacting with key regulators of the canonical Wnt signaling pathway, such as components of the beta-catenin destruction complex. Acts both as a positive and negative regulator of the Wnt signaling pathway, depending on the context. In Danio rerio (Zebrafish), this protein is APC membrane recruitment protein 1 (amer1).